The sequence spans 300 residues: GTPase Era (300 aa).

The Era-type G domain maps to 5–176 (RSGFVCLIGR…IDVLAAALPP (172 aa)). The interval 13–20 (GRPNTGKS) is G1. 13–20 (GRPNTGKS) is a binding site for GTP. The G2 stretch occupies residues 39–43 (QTTRH). A G3 region spans residues 61–64 (DTPG). GTP-binding positions include 61-65 (DTPGL) and 125-128 (TKID). The interval 125–128 (TKID) is G4. The G5 stretch occupies residues 155-157 (VSA). The 80-residue stretch at 207–286 (VHDELPHSLA…YLDLHVNVAK (80 aa)) folds into the KH type-2 domain.

The protein belongs to the TRAFAC class TrmE-Era-EngA-EngB-Septin-like GTPase superfamily. Era GTPase family. Monomer.

The protein resides in the cell envelope. Its subcellular location is the secreted. It is found in the cell wall. In terms of biological role, exhibits GTPase activity. Binds RNA but is probably not involved in ribosome assembly in mycobacteria. In Mycobacterium leprae (strain TN), this protein is GTPase Era.